Reading from the N-terminus, the 588-residue chain is Peptidoglycan D,D-transpeptidase FtsI (588 aa).

A helical transmembrane segment spans residues 19 to 39 (FISWRFALLCGCILLALAFLL). The Acyl-ester intermediate role is filled by S307. Residues 578–588 (INQGEGTGGRS) constitute a propeptide that is removed on maturation.

It belongs to the transpeptidase family. FtsI subfamily.

The protein localises to the cell inner membrane. It catalyses the reaction Preferential cleavage: (Ac)2-L-Lys-D-Ala-|-D-Ala. Also transpeptidation of peptidyl-alanyl moieties that are N-acyl substituents of D-alanine.. It participates in cell wall biogenesis; peptidoglycan biosynthesis. Its function is as follows. Catalyzes cross-linking of the peptidoglycan cell wall at the division septum. This chain is Peptidoglycan D,D-transpeptidase FtsI, found in Escherichia coli O157:H7.